A 974-amino-acid polypeptide reads, in one-letter code: Exocyst complex component 4 (974 aa).

Ala2 bears the N-acetylalanine mark. Residue Lys9 is modified to N6-acetyllysine. 2 positions are modified to phosphoserine: Ser32 and Ser226. A coiled-coil region spans residues 32–114 (STSDDVEDRE…HCKRDELRKL (83 aa)). Phosphothreonine occurs at positions 233 and 237. Phosphoserine is present on Ser468.

This sequence belongs to the SEC8 family. As to quaternary structure, the exocyst complex is composed of EXOC1, EXOC2, EXOC3, EXOC4, EXOC5, EXOC6, EXOC7 and EXOC8. Interacts with BIRC6/bruce. Interacts with MYRIP. Interacts with SH3BP1; required for the localization of both SH3BP1 and the exocyst to the leading edge of migrating cells. Interacts with SLC6A9.

Its subcellular location is the midbody. The protein resides in the midbody ring. The protein localises to the cell projection. It is found in the cytoplasm. It localises to the cytoskeleton. Its subcellular location is the microtubule organizing center. The protein resides in the centrosome. In terms of biological role, component of the exocyst complex involved in the docking of exocytic vesicles with fusion sites on the plasma membrane. This is Exocyst complex component 4 (EXOC4) from Homo sapiens (Human).